Reading from the N-terminus, the 299-residue chain is ATP phosphoribosyltransferase (299 aa).

It belongs to the ATP phosphoribosyltransferase family. Long subfamily. Equilibrium between an active dimeric form, an inactive hexameric form and higher aggregates. Interconversion between the various forms is largely reversible and is influenced by the natural substrates and inhibitors of the enzyme. Requires Mg(2+) as cofactor.

It is found in the cytoplasm. The catalysed reaction is 1-(5-phospho-beta-D-ribosyl)-ATP + diphosphate = 5-phospho-alpha-D-ribose 1-diphosphate + ATP. It functions in the pathway amino-acid biosynthesis; L-histidine biosynthesis; L-histidine from 5-phospho-alpha-D-ribose 1-diphosphate: step 1/9. Feedback inhibited by histidine. Catalyzes the condensation of ATP and 5-phosphoribose 1-diphosphate to form N'-(5'-phosphoribosyl)-ATP (PR-ATP). Has a crucial role in the pathway because the rate of histidine biosynthesis seems to be controlled primarily by regulation of HisG enzymatic activity. The chain is ATP phosphoribosyltransferase from Yersinia pseudotuberculosis serotype O:1b (strain IP 31758).